A 256-amino-acid chain; its full sequence is Small ribosomal subunit protein eS1 (256 aa).

The residue at position 2 (Ala-2) is an N-acetylalanine; partial.

Belongs to the eukaryotic ribosomal protein eS1 family. Component of the small ribosomal subunit. Mature ribosomes consist of a small (40S) and a large (60S) subunit. The 40S subunit contains about 33 different proteins and 1 molecule of RNA (18S). The 60S subunit contains about 49 different proteins and 3 molecules of RNA (25S, 5.8S and 5S).

It localises to the cytoplasm. This is Small ribosomal subunit protein eS1 from Coprinopsis cinerea (strain Okayama-7 / 130 / ATCC MYA-4618 / FGSC 9003) (Inky cap fungus).